The following is a 318-amino-acid chain: Strigolactone esterase D14 (318 aa).

Pro residues predominate over residues 1 to 11; that stretch reads MLRSTHPPPSS. The interval 1–48 is disordered; sequence MLRSTHPPPSSPSSSSSGGGGGGGSSASSSSEKTMVGGGGGGGGGSGS. Over residues 36 to 47 the composition is skewed to gly residues; that stretch reads VGGGGGGGGGSG. The active-site Nucleophile is Ser147. Residues Ser147 and Cys241 each coordinate substrate. Catalysis depends on residues Asp268 and His297. His297 is a substrate binding site.

Belongs to the AB hydrolase superfamily. As to quaternary structure, interacts with D53. The interaction between D53 and D14 is enhanced in the presence of strigolactones. The interaction with D53 occurs in the presence of (2'R) stereoisomers of strigolactones, but not (2'S) stereoisomers. Interacts with SLR1 in a strigolactone-dependent manner. Interacts with D3 in a strigolactone-dependent manner. Expressed in the parenchyma cells of the root stele and lateral roots, vascular tissues of vein and leaf sheath, ligule base, auricle base and stem base.

Its subcellular location is the cytoplasm. It is found in the nucleus. Functionally, involved in strigolactone (SL) signaling pathway. May function downstream of SL synthesis, as a component of hormone signaling or as an enzyme that participates in the conversion of SL to the bioactive form. Strigolactones are hormones that inhibit tillering and shoot branching through the MAX-dependent pathway, contribute to the regulation of shoot architectural response to phosphate-limiting conditions and function as rhizosphere signal that stimulates hyphal branching of arbuscular mycorrhizal fungi and trigger seed germination of root parasitic weeds. Strigolactone-dependent association of D14 with D3 and D53 (a repressor of SL signaling) triggers D53 ubiquitination and degradation. Hydrolyzes the butenolide ring of SLs. A reaction product D-OH is trapped in the cavity of D14, inducing the interaction with SLR1, and probably with other proteins such as D3 and D53. Contributes to the negative regulation of gibberellin signaling. In Oryza sativa subsp. japonica (Rice), this protein is Strigolactone esterase D14.